Consider the following 476-residue polypeptide: MKDTFVEKVDDFVRQHDVLKERSTIVVGVSGGPDSLALLYYLLEKRAAKQFEIVVAHVDHMFRGDESHEDLQFVQDLCKGLGVICETIRINVSQYQKQYGMNAQVAARECRYAFLERIMKKYDARYVALGHHGDDQVETILMRLVRGSTPKGYAGIAVKRPFHNGYLIRPLLGVTKEEIVNYCNELKIIPRIDPSNKKEVYTRNRLRKYVLPHLKEENPQVHEKFQKFSMQMQEDEAYLQELAFEKMNKVITKKSDKQISLSIPAFESMSMPLQRRGIQLILNYLYEYKIPSSLSSIHIDKVIEFFKRTQPSGSLDFPGDLKIVRAYEECSFGFKQEIVSPFLQDLSVPGTITLSNGDKLVTEVSEDIPSDMNETVFVAKYNDISYPIRIRSRENGDRMSIQGMNGTKKIKAIFIEAKVPREKREEWPVVCDASGNIIWLPLLKRSAFAISKETAKKDKYMIIHYKSKESSGRIMK.

30-35 lines the ATP pocket; the sequence is SGGPDS.

It belongs to the tRNA(Ile)-lysidine synthase family.

The protein resides in the cytoplasm. The enzyme catalyses cytidine(34) in tRNA(Ile2) + L-lysine + ATP = lysidine(34) in tRNA(Ile2) + AMP + diphosphate + H(+). Its function is as follows. Ligates lysine onto the cytidine present at position 34 of the AUA codon-specific tRNA(Ile) that contains the anticodon CAU, in an ATP-dependent manner. Cytidine is converted to lysidine, thus changing the amino acid specificity of the tRNA from methionine to isoleucine. The protein is tRNA(Ile)-lysidine synthase of Bacillus thuringiensis subsp. konkukian (strain 97-27).